We begin with the raw amino-acid sequence, 508 residues long: Beta-glucosidase 10 (508 aa).

A signal peptide spans 1–22 (MKLYSLLSVFLVILLATSDSDA). A beta-D-glucoside is bound by residues Q42, H142, and 187 to 188 (NE). Residue E188 is the Proton donor of the active site. A disulfide bridge links C207 with C215. N-linked (GlcNAc...) asparagine glycosylation is found at N214 and N219. An a beta-D-glucoside-binding site is contributed by Y331. The N-linked (GlcNAc...) asparagine glycan is linked to N365. E398 contributes to the a beta-D-glucoside binding site. Catalysis depends on E398, which acts as the Nucleophile. N431 carries N-linked (GlcNAc...) asparagine glycosylation. A beta-D-glucoside is bound by residues W441 and F457. N463, N485, and N501 each carry an N-linked (GlcNAc...) asparagine glycan.

It belongs to the glycosyl hydrolase 1 family.

The enzyme catalyses Hydrolysis of terminal, non-reducing beta-D-glucosyl residues with release of beta-D-glucose.. This Arabidopsis thaliana (Mouse-ear cress) protein is Beta-glucosidase 10.